We begin with the raw amino-acid sequence, 101 residues long: uncharacterized protein (101 aa).

Residues 13 to 33 traverse the membrane as a helical segment; sequence FISIMCLFSIPLCFSLSIFFF.

The protein resides in the membrane. This is an uncharacterized protein from Schizosaccharomyces pombe (strain 972 / ATCC 24843) (Fission yeast).